The primary structure comprises 468 residues: Cysteine--tRNA ligase (468 aa).

Cysteine 27 serves as a coordination point for Zn(2+). Residues 29 to 39 (PTVYNYFHIGN) carry the 'HIGH' region motif. Zn(2+)-binding residues include cysteine 207, histidine 232, and glutamate 236. The 'KMSKS' region motif lies at 264 to 268 (KMAKS). Lysine 267 is an ATP binding site.

It belongs to the class-I aminoacyl-tRNA synthetase family. Monomer. The cofactor is Zn(2+).

It is found in the cytoplasm. It catalyses the reaction tRNA(Cys) + L-cysteine + ATP = L-cysteinyl-tRNA(Cys) + AMP + diphosphate. This is Cysteine--tRNA ligase from Acetivibrio thermocellus (strain ATCC 27405 / DSM 1237 / JCM 9322 / NBRC 103400 / NCIMB 10682 / NRRL B-4536 / VPI 7372) (Clostridium thermocellum).